The chain runs to 446 residues: UDP-N-acetylmuramoylalanine--D-glutamate ligase (446 aa).

115 to 121 (GTNGKTT) provides a ligand contact to ATP.

The protein belongs to the MurCDEF family.

The protein resides in the cytoplasm. It carries out the reaction UDP-N-acetyl-alpha-D-muramoyl-L-alanine + D-glutamate + ATP = UDP-N-acetyl-alpha-D-muramoyl-L-alanyl-D-glutamate + ADP + phosphate + H(+). It functions in the pathway cell wall biogenesis; peptidoglycan biosynthesis. Cell wall formation. Catalyzes the addition of glutamate to the nucleotide precursor UDP-N-acetylmuramoyl-L-alanine (UMA). The sequence is that of UDP-N-acetylmuramoylalanine--D-glutamate ligase from Trichlorobacter lovleyi (strain ATCC BAA-1151 / DSM 17278 / SZ) (Geobacter lovleyi).